A 194-amino-acid polypeptide reads, in one-letter code: FMN-dependent NADH:quinone oxidoreductase (194 aa).

FMN contacts are provided by residues Ser-9, 15-17, and 85-88; these read SIS and MYNF.

It belongs to the azoreductase type 1 family. Homodimer. The cofactor is FMN.

It carries out the reaction 2 a quinone + NADH + H(+) = 2 a 1,4-benzosemiquinone + NAD(+). The enzyme catalyses N,N-dimethyl-1,4-phenylenediamine + anthranilate + 2 NAD(+) = 2-(4-dimethylaminophenyl)diazenylbenzoate + 2 NADH + 2 H(+). Its function is as follows. Quinone reductase that provides resistance to thiol-specific stress caused by electrophilic quinones. Functionally, also exhibits azoreductase activity. Catalyzes the reductive cleavage of the azo bond in aromatic azo compounds to the corresponding amines. This Xanthomonas oryzae pv. oryzae (strain KACC10331 / KXO85) protein is FMN-dependent NADH:quinone oxidoreductase.